Consider the following 169-residue polypeptide: EP300-interacting inhibitor of differentiation 1 (169 aa).

Residues 31–50 are disordered; that stretch reads GRGARGPAPEEGPMEEEAGP. An interaction with NR0B2 region spans residues 54–120; sequence RAQRGLFPEA…AGDALDGGFQ (67 aa). Residues 150-154 carry the LXCXE motif motif; the sequence is LGCDE.

Interacts via its LXCXE motif with the entire pocket region of RB1. Interacts with EP300, NR0B2 and TRIM27. In terms of tissue distribution, expressed in all adult tissues examined and during embryogenesis.

It localises to the nucleus. The protein resides in the cytoplasm. Interacts with RB1 and EP300 and acts as a repressor of MYOD1 transactivation. Inhibits EP300 and CBP histone acetyltransferase activity. May be involved in coupling cell cycle exit to the transcriptional activation of genes required for cellular differentiation. May act as a candidate coinhibitory factor for NR0B2 that can be directly linked to transcription inhibitory mechanisms. This is EP300-interacting inhibitor of differentiation 1 from Mus musculus (Mouse).